The sequence spans 710 residues: Adenylosuccinate synthetase (710 aa).

2 disordered regions span residues 1-51 and 84-111; these read MPVR…PVPQ and DEPPHGSQKSLSVAPYTANASSSSGRSK. 2 stretches are compositionally biased toward polar residues: residues 10-27 and 101-111; these read YNNSSPGVSNALSPSTTA and ANASSSSGRSK. GTP contacts are provided by residues 180 to 186 and 210 to 212; these read GDEGKGK and GHT. The active-site Proton acceptor is Asp181. The Mg(2+) site is built by Asp181 and Gly210. Residues 181–184, 208–211, Thr295, Lys309, Gln421, Thr437, and Lys567 each bind IMP; these read DEGK and NAGH. Catalysis depends on His211, which acts as the Proton donor. 563–569 is a substrate binding site; that stretch reads AVTKKPR. Residues Arg569 and 697-699 contribute to the GTP site; that span reads GNG.

Belongs to the adenylosuccinate synthetase family. Homodimer. Mg(2+) serves as cofactor.

The protein localises to the cytoplasm. It carries out the reaction IMP + L-aspartate + GTP = N(6)-(1,2-dicarboxyethyl)-AMP + GDP + phosphate + 2 H(+). Its pathway is purine metabolism; AMP biosynthesis via de novo pathway; AMP from IMP: step 1/2. Its function is as follows. Plays an important role in the salvage pathway for purine nucleotide biosynthesis. Catalyzes the first committed step in the biosynthesis of AMP from IMP. The sequence is that of Adenylosuccinate synthetase from Leishmania infantum.